The primary structure comprises 371 residues: Putative glutamate--cysteine ligase 2 (371 aa).

It belongs to the glutamate--cysteine ligase type 2 family. YbdK subfamily.

It catalyses the reaction L-cysteine + L-glutamate + ATP = gamma-L-glutamyl-L-cysteine + ADP + phosphate + H(+). ATP-dependent carboxylate-amine ligase which exhibits weak glutamate--cysteine ligase activity. The protein is Putative glutamate--cysteine ligase 2 of Burkholderia thailandensis (strain ATCC 700388 / DSM 13276 / CCUG 48851 / CIP 106301 / E264).